Here is a 670-residue protein sequence, read N- to C-terminus: DNA ligase (670 aa).

NAD(+)-binding positions include 32–36, 81–82, and Glu114; these read DSEYD and SL. The N6-AMP-lysine intermediate role is filled by Lys116. NAD(+) is bound by residues Arg137, Glu174, Lys291, and Lys315. Zn(2+) contacts are provided by Cys409, Cys412, Cys427, and Cys433. In terms of domain architecture, BRCT spans 592 to 670; it reads ASENLFKDKT…EEEFLAQITR (79 aa).

This sequence belongs to the NAD-dependent DNA ligase family. LigA subfamily. It depends on Mg(2+) as a cofactor. The cofactor is Mn(2+).

It catalyses the reaction NAD(+) + (deoxyribonucleotide)n-3'-hydroxyl + 5'-phospho-(deoxyribonucleotide)m = (deoxyribonucleotide)n+m + AMP + beta-nicotinamide D-nucleotide.. DNA ligase that catalyzes the formation of phosphodiester linkages between 5'-phosphoryl and 3'-hydroxyl groups in double-stranded DNA using NAD as a coenzyme and as the energy source for the reaction. It is essential for DNA replication and repair of damaged DNA. The chain is DNA ligase from Haemophilus influenzae (strain ATCC 51907 / DSM 11121 / KW20 / Rd).